Consider the following 88-residue polypeptide: Stannin (88 aa).

Residues 1-10 (MSIMDHSPTT) lie on the Mitochondrial intermembrane side of the membrane. A helical transmembrane segment spans residues 11–31 (GVVTVIVILIAIAALGALILG). The Cytoplasmic segment spans residues 32 to 88 (CWCYLRLQRISQSEDEESIVGDGETKEPFLLVQYSAKGPCVERKAKLMTPNGPEVHG). Ser-49 is modified (phosphoserine).

It belongs to the stannin family. Monomer.

It localises to the mitochondrion outer membrane. Its function is as follows. Plays a role in the toxic effects of organotins. Plays a role in endosomal maturation. The protein is Stannin (SNN) of Homo sapiens (Human).